Consider the following 158-residue polypeptide: Crossover junction endodeoxyribonuclease RuvC (158 aa).

Residues D7, E66, and D139 contribute to the active site. 3 residues coordinate Mg(2+): D7, E66, and D139.

It belongs to the RuvC family. As to quaternary structure, homodimer which binds Holliday junction (HJ) DNA. The HJ becomes 2-fold symmetrical on binding to RuvC with unstacked arms; it has a different conformation from HJ DNA in complex with RuvA. In the full resolvosome a probable DNA-RuvA(4)-RuvB(12)-RuvC(2) complex forms which resolves the HJ. Mg(2+) is required as a cofactor.

It is found in the cytoplasm. It carries out the reaction Endonucleolytic cleavage at a junction such as a reciprocal single-stranded crossover between two homologous DNA duplexes (Holliday junction).. In terms of biological role, the RuvA-RuvB-RuvC complex processes Holliday junction (HJ) DNA during genetic recombination and DNA repair. Endonuclease that resolves HJ intermediates. Cleaves cruciform DNA by making single-stranded nicks across the HJ at symmetrical positions within the homologous arms, yielding a 5'-phosphate and a 3'-hydroxyl group; requires a central core of homology in the junction. The consensus cleavage sequence is 5'-(A/T)TT(C/G)-3'. Cleavage occurs on the 3'-side of the TT dinucleotide at the point of strand exchange. HJ branch migration catalyzed by RuvA-RuvB allows RuvC to scan DNA until it finds its consensus sequence, where it cleaves and resolves the cruciform DNA. The protein is Crossover junction endodeoxyribonuclease RuvC of Campylobacter lari (strain RM2100 / D67 / ATCC BAA-1060).